Consider the following 450-residue polypeptide: Chromosomal replication initiator protein DnaA (450 aa).

A domain I, interacts with DnaA modulators region spans residues M1–Q84. The segment at Q84–S111 is domain II. The interval M112–S328 is domain III, AAA+ region. Residues G156, G158, K159, and T160 each coordinate ATP. The interval S329–L450 is domain IV, binds dsDNA.

It belongs to the DnaA family. As to quaternary structure, oligomerizes as a right-handed, spiral filament on DNA at oriC.

The protein localises to the cytoplasm. Plays an essential role in the initiation and regulation of chromosomal replication. ATP-DnaA binds to the origin of replication (oriC) to initiate formation of the DNA replication initiation complex once per cell cycle. Binds the DnaA box (a 9 base pair repeat at the origin) and separates the double-stranded (ds)DNA. Forms a right-handed helical filament on oriC DNA; dsDNA binds to the exterior of the filament while single-stranded (ss)DNA is stabiized in the filament's interior. The ATP-DnaA-oriC complex binds and stabilizes one strand of the AT-rich DNA unwinding element (DUE), permitting loading of DNA polymerase. After initiation quickly degrades to an ADP-DnaA complex that is not apt for DNA replication. Binds acidic phospholipids. The protein is Chromosomal replication initiator protein DnaA of Geobacillus thermodenitrificans (strain NG80-2).